The sequence spans 244 residues: Claudin-12 (244 aa).

The Cytoplasmic portion of the chain corresponds to 1-10; sequence MGCRDVHAAT. The helical transmembrane segment at 11-31 threads the bilayer; sequence VLSFLCGIASVAGLFAGTLLP. The Extracellular portion of the chain corresponds to 32–87; sequence NWRKLRLITFNRNEKNLTIYTGLWVKCARYDGSSDCLMYDRTWYLSVDQLDLRVLQ. Residues 88-108 traverse the membrane as a helical segment; the sequence is FALPLSIVIAMGALLLCLIGM. The Cytoplasmic segment spans residues 109 to 135; the sequence is CNTAFNSSVPNIKLAKCLVNSAGCHLV. A helical membrane pass occupies residues 136-156; that stretch reads AGLLFFLAGTVSLSPSIWAIF. Over 157–174 the chain is Extracellular; that stretch reads YNSHLNRKFEPVFTFDYA. Residues 175 to 195 form a helical membrane-spanning segment; that stretch reads VFVTIASSGGLFMTALLLFVW. Over 196–244 the chain is Cytoplasmic; it reads YCACKSLSSPFWQPLYSHAPGMHTYSQPYSSRSRLSAIEIDIPVVSHST. Phosphoserine is present on residues serine 228 and serine 231.

It belongs to the claudin family. Interacts with OCLN.

It localises to the cell junction. Its subcellular location is the tight junction. The protein resides in the cell membrane. Plays a major role in tight junction-specific obliteration of the intercellular space, through calcium-independent cell-adhesion activity. The chain is Claudin-12 (Cldn12) from Mus musculus (Mouse).